Here is a 248-residue protein sequence, read N- to C-terminus: ATP synthase subunit a, chloroplastic (248 aa).

5 consecutive transmembrane segments (helical) span residues 38 to 58 (QVLI…TLAV), 96 to 116 (VPFI…GALF), 135 to 155 (INTT…AGFT), 200 to 220 (LVVA…VMFL), and 221 to 241 (GLFT…AYIG).

Belongs to the ATPase A chain family. In terms of assembly, F-type ATPases have 2 components, CF(1) - the catalytic core - and CF(0) - the membrane proton channel. CF(1) has five subunits: alpha(3), beta(3), gamma(1), delta(1), epsilon(1). CF(0) has four main subunits: a, b, b' and c.

It is found in the plastid. The protein resides in the chloroplast thylakoid membrane. In terms of biological role, key component of the proton channel; it plays a direct role in the translocation of protons across the membrane. This is ATP synthase subunit a, chloroplastic from Cryptomeria japonica (Japanese cedar).